The sequence spans 189 residues: Crossover junction endodeoxyribonuclease RuvC (189 aa).

Residues aspartate 8, glutamate 67, and aspartate 139 contribute to the active site. Mg(2+) contacts are provided by aspartate 8, glutamate 67, and aspartate 139.

It belongs to the RuvC family. Homodimer which binds Holliday junction (HJ) DNA. The HJ becomes 2-fold symmetrical on binding to RuvC with unstacked arms; it has a different conformation from HJ DNA in complex with RuvA. In the full resolvosome a probable DNA-RuvA(4)-RuvB(12)-RuvC(2) complex forms which resolves the HJ. It depends on Mg(2+) as a cofactor.

The protein localises to the cytoplasm. The enzyme catalyses Endonucleolytic cleavage at a junction such as a reciprocal single-stranded crossover between two homologous DNA duplexes (Holliday junction).. The RuvA-RuvB-RuvC complex processes Holliday junction (HJ) DNA during genetic recombination and DNA repair. Endonuclease that resolves HJ intermediates. Cleaves cruciform DNA by making single-stranded nicks across the HJ at symmetrical positions within the homologous arms, yielding a 5'-phosphate and a 3'-hydroxyl group; requires a central core of homology in the junction. The consensus cleavage sequence is 5'-(A/T)TT(C/G)-3'. Cleavage occurs on the 3'-side of the TT dinucleotide at the point of strand exchange. HJ branch migration catalyzed by RuvA-RuvB allows RuvC to scan DNA until it finds its consensus sequence, where it cleaves and resolves the cruciform DNA. The protein is Crossover junction endodeoxyribonuclease RuvC of Histophilus somni (strain 129Pt) (Haemophilus somnus).